The chain runs to 92 residues: RNA-binding protein Hfq (92 aa).

A Sm domain is found at Asp-9 to Phe-68.

Belongs to the Hfq family. Homohexamer.

RNA chaperone that binds small regulatory RNA (sRNAs) and mRNAs to facilitate mRNA translational regulation in response to envelope stress, environmental stress and changes in metabolite concentrations. Also binds with high specificity to tRNAs. This is RNA-binding protein Hfq from Shewanella halifaxensis (strain HAW-EB4).